Here is a 374-residue protein sequence, read N- to C-terminus: All-trans-retinol dehydrogenase [NAD(+)] ADH7 (374 aa).

N-acetylmethionine is present on Met1. Zn(2+) contacts are provided by Cys47, His68, Cys98, Cys101, Cys104, Cys112, and Cys174. Residues 199 to 204 (GLGGVG), Asp223, Lys228, 292 to 294 (VGA), and Arg369 each bind NAD(+).

Belongs to the zinc-containing alcohol dehydrogenase family. Class-IV subfamily. In terms of assembly, homodimer. It depends on Zn(2+) as a cofactor. In terms of tissue distribution, preferentially expressed in stomach.

It is found in the cytoplasm. It carries out the reaction a primary alcohol + NAD(+) = an aldehyde + NADH + H(+). The catalysed reaction is 10-hydroxydecanoate + NAD(+) = 10-oxodecanoate + NADH + H(+). It catalyses the reaction all-trans-retinol + NAD(+) = all-trans-retinal + NADH + H(+). The enzyme catalyses 9-cis-retinol + NAD(+) = 9-cis-retinal + NADH + H(+). It carries out the reaction all-trans-3,4-didehydroretinol + NAD(+) = all-trans-3,4-didehydroretinal + NADH + H(+). The catalysed reaction is all-trans-4-hydroxyretinol + NAD(+) = all-trans-4-hydroxyretinal + NADH + H(+). It catalyses the reaction all-trans-4-oxoretinol + NAD(+) = all-trans-4-oxoretinal + NADH + H(+). The enzyme catalyses 12-hydroxydodecanoate + NAD(+) = 12-oxododecanoate + NADH + H(+). It carries out the reaction 16-hydroxyhexadecanoate + NAD(+) = 16-oxohexadecanoate + NADH + H(+). The catalysed reaction is hexan-1-ol + NAD(+) = hexanal + NADH + H(+). It catalyses the reaction (E)-hex-2-en-1-ol + NAD(+) = (E)-hex-2-enal + NADH + H(+). The enzyme catalyses (E)-4-hydroxynon-2-en-1-ol + NAD(+) = (E)-4-hydroxynon-2-enal + NADH + H(+). Retinol oxidation is inhibited by the detergent Tween 80. Ethanol inhibits both all-trans-retinol and 9-cis-retinol oxidation. 13-cis-retinol is an effective competitive inhibitor of the 9-cis-retinol oxidation. All-trans-retinoic acid is a powerful inhibitor of all-trans-retinol oxidation. 13-cis-retinoic acid is a powerful inhibitor of all-trans-retinol oxidation. Cimetidine and ranitidine inhibited ethanol oxidation. Functionally, catalyzes the NAD-dependent oxidation of all-trans-retinol, alcohol, aldehyde and omega-hydroxy fatty acids and their derivatives. Oxidizes preferentially all trans-retinol, all-trans-4-hydroxyretinol, 9-cis-retinol, 2-hexenol, and long chain omega-hydroxy fatty acids such as juniperic acid. In vitro can also catalyze the NADH-dependent reduction of all-trans-retinal and aldehydes and their derivatives. Reduces preferentially all trans-retinal, all-trans-4-oxoretinal and hexanal. Catalyzes in the oxidative direction with higher efficiency. Therefore may participate in retinoid metabolism, fatty acid omega-oxidation, and elimination of cytotoxic aldehydes produced by lipid peroxidation. The polypeptide is All-trans-retinol dehydrogenase [NAD(+)] ADH7 (Adh7) (Rattus norvegicus (Rat)).